We begin with the raw amino-acid sequence, 259 residues long: Kynurenine formamidase (259 aa).

An HGGXW motif is present at residues histidine 34 to tryptophan 38. The Nucleophile role is filled by serine 103. Residues aspartate 196 and histidine 228 contribute to the active site.

This sequence belongs to the kynurenine formamidase family. Homodimer.

The enzyme catalyses N-formyl-L-kynurenine + H2O = L-kynurenine + formate + H(+). Its pathway is amino-acid degradation; L-tryptophan degradation via kynurenine pathway; L-kynurenine from L-tryptophan: step 2/2. Its function is as follows. Catalyzes the hydrolysis of N-formyl-L-kynurenine to L-kynurenine, the second step in the kynurenine pathway of tryptophan degradation. Kynurenine may be further oxidized to nicotinic acid, NAD(H) and NADP(H). Required for elimination of toxic metabolites. This chain is Kynurenine formamidase, found in Meyerozyma guilliermondii (strain ATCC 6260 / CBS 566 / DSM 6381 / JCM 1539 / NBRC 10279 / NRRL Y-324) (Yeast).